Consider the following 941-residue polypeptide: Bifunctional glutamine synthetase adenylyltransferase/adenylyl-removing enzyme (941 aa).

The adenylyl removase stretch occupies residues methionine 1–glycine 431. Residues asparagine 447–lysine 941 are adenylyl transferase.

It belongs to the GlnE family. The cofactor is Mg(2+).

The enzyme catalyses [glutamine synthetase]-O(4)-(5'-adenylyl)-L-tyrosine + phosphate = [glutamine synthetase]-L-tyrosine + ADP. It carries out the reaction [glutamine synthetase]-L-tyrosine + ATP = [glutamine synthetase]-O(4)-(5'-adenylyl)-L-tyrosine + diphosphate. Functionally, involved in the regulation of glutamine synthetase GlnA, a key enzyme in the process to assimilate ammonia. When cellular nitrogen levels are high, the C-terminal adenylyl transferase (AT) inactivates GlnA by covalent transfer of an adenylyl group from ATP to specific tyrosine residue of GlnA, thus reducing its activity. Conversely, when nitrogen levels are low, the N-terminal adenylyl removase (AR) activates GlnA by removing the adenylyl group by phosphorolysis, increasing its activity. The regulatory region of GlnE binds the signal transduction protein PII (GlnB) which indicates the nitrogen status of the cell. The polypeptide is Bifunctional glutamine synthetase adenylyltransferase/adenylyl-removing enzyme (Bordetella pertussis (strain Tohama I / ATCC BAA-589 / NCTC 13251)).